The chain runs to 503 residues: Probable cytosol aminopeptidase (503 aa).

Mn(2+) contacts are provided by Lys-270 and Asp-275. The active site involves Lys-282. The Mn(2+) site is built by Asp-293, Asp-352, and Glu-354. Arg-356 is an active-site residue.

The protein belongs to the peptidase M17 family. Mn(2+) is required as a cofactor.

The protein localises to the cytoplasm. The catalysed reaction is Release of an N-terminal amino acid, Xaa-|-Yaa-, in which Xaa is preferably Leu, but may be other amino acids including Pro although not Arg or Lys, and Yaa may be Pro. Amino acid amides and methyl esters are also readily hydrolyzed, but rates on arylamides are exceedingly low.. It carries out the reaction Release of an N-terminal amino acid, preferentially leucine, but not glutamic or aspartic acids.. Its function is as follows. Presumably involved in the processing and regular turnover of intracellular proteins. Catalyzes the removal of unsubstituted N-terminal amino acids from various peptides. This Serratia proteamaculans (strain 568) protein is Probable cytosol aminopeptidase.